A 194-amino-acid chain; its full sequence is dCTP deaminase (194 aa).

DCTP is bound by residues 110–115, Asp-128, 136–138, Tyr-171, Lys-178, and Gln-182; these read RSSLAR and VLE. Glu-138 functions as the Proton donor/acceptor in the catalytic mechanism. Positions 173–194 are disordered; the sequence is SRQDAKYKNQQSAVASRINQDR. Over residues 180–194 the composition is skewed to polar residues; sequence KNQQSAVASRINQDR.

The protein belongs to the dCTP deaminase family. In terms of assembly, homotrimer.

It carries out the reaction dCTP + H2O + H(+) = dUTP + NH4(+). Its pathway is pyrimidine metabolism; dUMP biosynthesis; dUMP from dCTP (dUTP route): step 1/2. In terms of biological role, catalyzes the deamination of dCTP to dUTP. This is dCTP deaminase from Actinobacillus succinogenes (strain ATCC 55618 / DSM 22257 / CCUG 43843 / 130Z).